The primary structure comprises 838 residues: Probable inorganic carbon transporter subunit DabA (838 aa).

Zn(2+)-binding residues include C353, D355, H537, and C552.

Belongs to the inorganic carbon transporter (TC 9.A.2) DabA family. Forms a complex with DabB. Requires Zn(2+) as cofactor.

The protein resides in the cell membrane. In terms of biological role, part of an energy-coupled inorganic carbon pump. The protein is Probable inorganic carbon transporter subunit DabA of Chloroflexus aurantiacus (strain ATCC 29366 / DSM 635 / J-10-fl).